Reading from the N-terminus, the 92-residue chain is Antifungal protein B (92 aa).

A signal peptide spans 1-18 (MHITSIAIVFFAAMGAVA). A propeptide spanning residues 19-34 (SPIATESDDLDARDVQ) is cleaved from the precursor. Cystine bridges form between Cys-42/Cys-70, Cys-49/Cys-77, and Cys-62/Cys-88.

Belongs to the antifungal protein pafB family.

The protein resides in the secreted. Its subcellular location is the host cytoplasm. Antifungal protein that acts as an inhibitor of growth of human pathogenic molds and yeasts. The chain is Antifungal protein B from Penicillium rubens (strain ATCC 28089 / DSM 1075 / NRRL 1951 / Wisconsin 54-1255) (Penicillium chrysogenum).